We begin with the raw amino-acid sequence, 126 residues long: C-type natriuretic peptide (126 aa).

The N-terminal stretch at 1–23 is a signal peptide; that stretch reads MHLSQLIACALLLALLSLRPSEA. Residues 20 to 73 form a disordered region; sequence PSEAKPGTPPKVPRTPPGEELADSQAAGGNQKKGDKTPGSGGANLKGDRSRLLR. Positions 24–73 are excised as a propeptide; the sequence is KPGTPPKVPRTPPGEELADSQAAGGNQKKGDKTPGSGGANLKGDRSRLLR. Over residues 26-35 the composition is skewed to pro residues; that stretch reads GTPPKVPRTP. Cysteines 110 and 126 form a disulfide.

It belongs to the natriuretic peptide family. Post-translationally, degraded by IDE (in vitro).

The protein localises to the secreted. Functionally, hormone which plays a role in endochondral ossification through regulation of cartilaginous growth plate chondrocytes proliferation and differentiation. May also be vasoactive and natriuretic. Acts by specifically binding and stimulating NPR2 to produce cGMP. Binds the clearance receptor NPR3. The polypeptide is C-type natriuretic peptide (Nppc) (Mus musculus (Mouse)).